The chain runs to 396 residues: 1-deoxy-D-xylulose 5-phosphate reductoisomerase (396 aa).

Threonine 17, glycine 18, serine 19, isoleucine 20, asparagine 47, and asparagine 130 together coordinate NADPH. A 1-deoxy-D-xylulose 5-phosphate-binding site is contributed by lysine 131. Glutamate 132 is an NADPH binding site. Aspartate 156 lines the Mn(2+) pocket. Residues serine 157, glutamate 158, serine 182, and histidine 205 each contribute to the 1-deoxy-D-xylulose 5-phosphate site. Glutamate 158 serves as a coordination point for Mn(2+). An NADPH-binding site is contributed by glycine 211. Serine 218, asparagine 223, lysine 224, and glutamate 227 together coordinate 1-deoxy-D-xylulose 5-phosphate. Glutamate 227 is a binding site for Mn(2+).

The protein belongs to the DXR family. Mg(2+) serves as cofactor. Mn(2+) is required as a cofactor.

It catalyses the reaction 2-C-methyl-D-erythritol 4-phosphate + NADP(+) = 1-deoxy-D-xylulose 5-phosphate + NADPH + H(+). It participates in isoprenoid biosynthesis; isopentenyl diphosphate biosynthesis via DXP pathway; isopentenyl diphosphate from 1-deoxy-D-xylulose 5-phosphate: step 1/6. Catalyzes the NADPH-dependent rearrangement and reduction of 1-deoxy-D-xylulose-5-phosphate (DXP) to 2-C-methyl-D-erythritol 4-phosphate (MEP). The protein is 1-deoxy-D-xylulose 5-phosphate reductoisomerase of Rhizobium johnstonii (strain DSM 114642 / LMG 32736 / 3841) (Rhizobium leguminosarum bv. viciae).